The sequence spans 568 residues: 4-hydroxy-7-methoxy-3-oxo-3,4-dihydro-2H-1,4-benzoxazin-2-yl glucoside beta-D-glucosidase, chloroplastic (568 aa).

A chloroplast-targeting transit peptide spans 1 to 50; the sequence is MALLVGGTLNPTTHLSLRSRAGRNSENVWLRSAASSQTSKGRFCNLTVRA. Residues glutamine 92, histidine 194, and 239 to 240 contribute to the a beta-D-glucoside site; that span reads NE. The active-site Proton donor is glutamate 240. Cysteine 259 and cysteine 265 form a disulfide bridge. Residues tyrosine 383, glutamate 456, tryptophan 504, 511-512, and phenylalanine 520 each bind a beta-D-glucoside; that span reads EW. The active-site Nucleophile is glutamate 456.

This sequence belongs to the glycosyl hydrolase 1 family. As to quaternary structure, homohexamer. As to expression, expressed in seedlings, mesocotyl, coleoptile, leaf sheath, and roots.

The protein resides in the plastid. Its subcellular location is the chloroplast. It carries out the reaction DIMBOA beta-D-glucoside + H2O = DIMBOA + D-glucose. It catalyses the reaction DIBOA beta-D-glucoside + H2O = DIBOA + D-glucose. The catalysed reaction is Hydrolysis of terminal, non-reducing beta-D-glucosyl residues with release of beta-D-glucose.. With respect to regulation, inhibited by castanospermine, Ag(+) and Cu(2+). 34% inhibition by Zn(2+) and not affected by EDTA. Functionally, involved in defense of young plant parts against pests via the production of benzoxazolinones (hydroxamic acids) from hydroxamic acid glucosides. The preferred substrate is DIBOA-beta-D-glucoside. Can also use esculin and genistein glucoside as substrates, but no activity with salicin, p-nitrophenyl-alpha-glucoside or substrates related to cell wall components. This is 4-hydroxy-7-methoxy-3-oxo-3,4-dihydro-2H-1,4-benzoxazin-2-yl glucoside beta-D-glucosidase, chloroplastic from Secale cereale (Rye).